The following is a 471-amino-acid chain: Probable flavin-containing monoamine oxidase B (471 aa).

Cys-406 carries the S-8alpha-FAD cysteine modification.

It belongs to the flavin monoamine oxidase family. FAD is required as a cofactor.

The catalysed reaction is a secondary aliphatic amine + O2 + H2O = a primary amine + an aldehyde + H2O2. The sequence is that of Probable flavin-containing monoamine oxidase B (maoB-1) from Dictyostelium discoideum (Social amoeba).